The chain runs to 413 residues: 2,3-bisphosphoglycerate-independent phosphoglycerate mutase (413 aa).

Belongs to the BPG-independent phosphoglycerate mutase family. A-PGAM subfamily.

The catalysed reaction is (2R)-2-phosphoglycerate = (2R)-3-phosphoglycerate. It participates in carbohydrate degradation; glycolysis; pyruvate from D-glyceraldehyde 3-phosphate: step 3/5. Catalyzes the interconversion of 2-phosphoglycerate and 3-phosphoglycerate. The polypeptide is 2,3-bisphosphoglycerate-independent phosphoglycerate mutase (Sulfurisphaera tokodaii (strain DSM 16993 / JCM 10545 / NBRC 100140 / 7) (Sulfolobus tokodaii)).